A 269-amino-acid chain; its full sequence is Zinc import ATP-binding protein ZnuC (269 aa).

The region spanning 6–221 (VRLTQVGVSF…PAFVELFGQD (216 aa)) is the ABC transporter domain. Position 38–45 (38–45 (GPNGAGKT)) interacts with ATP.

It belongs to the ABC transporter superfamily. Zinc importer (TC 3.A.1.15.5) family. In terms of assembly, the complex is composed of two ATP-binding proteins (ZnuC), two transmembrane proteins (ZnuB) and a solute-binding protein (ZnuA).

The protein resides in the cell inner membrane. The enzyme catalyses Zn(2+)(out) + ATP(in) + H2O(in) = Zn(2+)(in) + ADP(in) + phosphate(in) + H(+)(in). Its function is as follows. Part of the ABC transporter complex ZnuABC involved in zinc import. Responsible for energy coupling to the transport system. The chain is Zinc import ATP-binding protein ZnuC from Pseudomonas aeruginosa (strain UCBPP-PA14).